Consider the following 95-residue polypeptide: Ribosome-binding factor A (95 aa).

Belongs to the RbfA family. Interacts with the 30S ribosomal subunit as a monomer, binding in a position overlapping the sites of the A and P site tRNAs, and displacing segments of the 16S rRNA. Probably contacts 16S rRNA and ribosomal protein S9 and S13.

Its subcellular location is the cytoplasm. In terms of biological role, one of several proteins that assist in the late maturation steps of the functional core of the 30S ribosomal subunit. Associates with free 30S ribosomal subunits (but not with 30S subunits that are part of 70S ribosomes or polysomes). Required for efficient processing of 16S rRNA. Probably interacts with the 5'-terminal helix region of 16S rRNA, bringing together different domains of the 30S ribosomal subunit which aids assembly. This is Ribosome-binding factor A from Thermus thermophilus (strain ATCC 27634 / DSM 579 / HB8).